Consider the following 43-residue polypeptide: Protein PsbN (43 aa).

Residues 5–25 traverse the membrane as a helical segment; it reads TVLSIFISSLLLGITIYSIYI.

It belongs to the PsbN family.

The protein resides in the plastid. It localises to the chloroplast thylakoid membrane. May play a role in photosystem I and II biogenesis. This chain is Protein PsbN, found in Gracilaria tenuistipitata var. liui (Red alga).